A 136-amino-acid polypeptide reads, in one-letter code: Small ribosomal subunit protein uS12 (136 aa).

The segment at 1 to 28 is disordered; that stretch reads MPTIQQLIRSERQELKKKTKSPALKSCP. Asp-89 carries the 3-methylthioaspartic acid modification. The segment at 101-136 is disordered; the sequence is TLDTAGVKDRKQGRSKYGAKRPKPGAASTASTGKKR. Over residues 113–123 the composition is skewed to basic residues; the sequence is GRSKYGAKRPK.

This sequence belongs to the universal ribosomal protein uS12 family. As to quaternary structure, part of the 30S ribosomal subunit. Contacts proteins S8 and S17. May interact with IF1 in the 30S initiation complex.

In terms of biological role, with S4 and S5 plays an important role in translational accuracy. Interacts with and stabilizes bases of the 16S rRNA that are involved in tRNA selection in the A site and with the mRNA backbone. Located at the interface of the 30S and 50S subunits, it traverses the body of the 30S subunit contacting proteins on the other side and probably holding the rRNA structure together. The combined cluster of proteins S8, S12 and S17 appears to hold together the shoulder and platform of the 30S subunit. The protein is Small ribosomal subunit protein uS12 of Cyanothece sp. (strain PCC 7425 / ATCC 29141).